Consider the following 71-residue polypeptide: Small ribosomal subunit protein bS21 (71 aa).

Positions 49-59 (KAAAVKRAAKK) are enriched in basic residues. Residues 49 to 71 (KAAAVKRAAKKVSRENARRVRMY) form a disordered region. The segment covering 60–71 (VSRENARRVRMY) has biased composition (basic and acidic residues).

It belongs to the bacterial ribosomal protein bS21 family.

This chain is Small ribosomal subunit protein bS21, found in Colwellia psychrerythraea (strain 34H / ATCC BAA-681) (Vibrio psychroerythus).